Here is a 79-residue protein sequence, read N- to C-terminus: Acyl carrier protein (79 aa).

Residues 2-77 (SEVAEKVKKI…DAIDYIEKKK (76 aa)) form the Carrier domain. S37 bears the O-(pantetheine 4'-phosphoryl)serine mark.

It belongs to the acyl carrier protein (ACP) family. Post-translationally, 4'-phosphopantetheine is transferred from CoA to a specific serine of apo-ACP by AcpS. This modification is essential for activity because fatty acids are bound in thioester linkage to the sulfhydryl of the prosthetic group.

It is found in the cytoplasm. It participates in lipid metabolism; fatty acid biosynthesis. Functionally, carrier of the growing fatty acid chain in fatty acid biosynthesis. The polypeptide is Acyl carrier protein (Acidiphilium cryptum (strain JF-5)).